Reading from the N-terminus, the 639-residue chain is Chaperone protein DnaK 1 (639 aa).

Threonine 199 carries the phosphothreonine; by autocatalysis modification. A compositionally biased stretch (low complexity) spans 603 to 612 (QQQAQAQQAP). The disordered stretch occupies residues 603-639 (QQQAQAQQAPGGEGEQEAKQDDNVVDAEFEEVKDEKK). Over residues 625-639 (NVVDAEFEEVKDEKK) the composition is skewed to acidic residues.

The protein belongs to the heat shock protein 70 family.

Functionally, acts as a chaperone. This chain is Chaperone protein DnaK 1, found in Photobacterium profundum (strain SS9).